Reading from the N-terminus, the 140-residue chain is uncharacterized protein (140 aa).

It belongs to the peptidase S24 family.

This is an uncharacterized protein from Haemophilus influenzae (strain ATCC 51907 / DSM 11121 / KW20 / Rd).